The chain runs to 345 residues: Biotin synthase (345 aa).

The 228-residue stretch at Asn66 to Arg293 folds into the Radical SAM core domain. Residues Cys81, Cys85, and Cys88 each contribute to the [4Fe-4S] cluster site. Residues Cys125, Cys156, Cys216, and Arg288 each coordinate [2Fe-2S] cluster.

This sequence belongs to the radical SAM superfamily. Biotin synthase family. Homodimer. The cofactor is [4Fe-4S] cluster. It depends on [2Fe-2S] cluster as a cofactor.

The catalysed reaction is (4R,5S)-dethiobiotin + (sulfur carrier)-SH + 2 reduced [2Fe-2S]-[ferredoxin] + 2 S-adenosyl-L-methionine = (sulfur carrier)-H + biotin + 2 5'-deoxyadenosine + 2 L-methionine + 2 oxidized [2Fe-2S]-[ferredoxin]. It participates in cofactor biosynthesis; biotin biosynthesis; biotin from 7,8-diaminononanoate: step 2/2. Catalyzes the conversion of dethiobiotin (DTB) to biotin by the insertion of a sulfur atom into dethiobiotin via a radical-based mechanism. The polypeptide is Biotin synthase (Cupriavidus metallidurans (strain ATCC 43123 / DSM 2839 / NBRC 102507 / CH34) (Ralstonia metallidurans)).